Consider the following 221-residue polypeptide: Lipoprotein-releasing system ATP-binding protein LolD (221 aa).

Residues 8–220 (LKMISKHYKQ…YNLKHGLLNI (213 aa)) enclose the ABC transporter domain. ATP is bound at residue 42 to 49 (GSSGSGKS).

The protein belongs to the ABC transporter superfamily. Lipoprotein translocase (TC 3.A.1.125) family. As to quaternary structure, the complex is composed of two ATP-binding proteins (LolD) and two transmembrane proteins (LolC and LolE).

Its subcellular location is the cell inner membrane. Part of the ABC transporter complex LolCDE involved in the translocation of mature outer membrane-directed lipoproteins, from the inner membrane to the periplasmic chaperone, LolA. Responsible for the formation of the LolA-lipoprotein complex in an ATP-dependent manner. This chain is Lipoprotein-releasing system ATP-binding protein LolD, found in Rickettsia prowazekii (strain Madrid E).